We begin with the raw amino-acid sequence, 257 residues long: N-acetylglucosaminyldiphosphoundecaprenol N-acetyl-beta-D-mannosaminyltransferase (257 aa).

Belongs to the glycosyltransferase 26 family. TagA/TarA subfamily.

It carries out the reaction UDP-N-acetyl-alpha-D-mannosamine + N-acetyl-alpha-D-glucosaminyl-di-trans,octa-cis-undecaprenyl diphosphate = N-acetyl-beta-D-mannosaminyl-(1-&gt;4)-N-acetyl-alpha-D-glucosaminyl di-trans,octa-cis-undecaprenyl diphosphate + UDP + H(+). The protein operates within cell wall biogenesis; poly(ribitol phosphate) teichoic acid biosynthesis. Catalyzes the conversion of GlcNAc-PP-undecaprenol into ManNAc-GlcNAc-PP-undecaprenol, the first committed lipid intermediate in the de novo synthesis of teichoic acid. This is N-acetylglucosaminyldiphosphoundecaprenol N-acetyl-beta-D-mannosaminyltransferase from Bacillus spizizenii (strain ATCC 23059 / NRRL B-14472 / W23) (Bacillus subtilis subsp. spizizenii).